The sequence spans 92 residues: Small ribosomal subunit protein uS19c (92 aa).

This sequence belongs to the universal ribosomal protein uS19 family.

The protein localises to the plastid. It localises to the chloroplast. Functionally, protein S19 forms a complex with S13 that binds strongly to the 16S ribosomal RNA. This is Small ribosomal subunit protein uS19c from Platanus occidentalis (Sycamore).